A 259-amino-acid chain; its full sequence is Global transcriptional regulator CodY (259 aa).

The tract at residues 1-155 (MNLLEKTRKI…GATVVGMEIL (155 aa)) is GAF domain. Positions 203–222 (ASKIADRVGITRSVIVNALR) form a DNA-binding region, H-T-H motif. S215 is subject to Phosphoserine.

Belongs to the CodY family.

The protein resides in the cytoplasm. In terms of biological role, DNA-binding global transcriptional regulator which is involved in the adaptive response to starvation and acts by directly or indirectly controlling the expression of numerous genes in response to nutrient availability. During rapid exponential growth, CodY is highly active and represses genes whose products allow adaptation to nutrient depletion. This is Global transcriptional regulator CodY from Geobacillus thermodenitrificans (strain NG80-2).